Here is a 245-residue protein sequence, read N- to C-terminus: 5-oxoprolinase subunit A (245 aa).

The protein belongs to the LamB/PxpA family. In terms of assembly, forms a complex composed of PxpA, PxpB and PxpC.

The catalysed reaction is 5-oxo-L-proline + ATP + 2 H2O = L-glutamate + ADP + phosphate + H(+). Catalyzes the cleavage of 5-oxoproline to form L-glutamate coupled to the hydrolysis of ATP to ADP and inorganic phosphate. The protein is 5-oxoprolinase subunit A of Haemophilus influenzae (strain PittGG).